The following is a 177-amino-acid chain: Putative HVA22-like protein g (177 aa).

Residues 145 to 165 form a disordered region; sequence QSTPKSKAEEKKETTIPKLDD. Over residues 150 to 165 the composition is skewed to basic and acidic residues; the sequence is SKAEEKKETTIPKLDD.

This sequence belongs to the DP1 family.

The sequence is that of Putative HVA22-like protein g (HVA22G) from Arabidopsis thaliana (Mouse-ear cress).